A 328-amino-acid chain; its full sequence is DhaKLM operon coactivator DhaQ (328 aa).

Residues 6 to 328 (STNEIPEEML…LNVPTGAFAW (323 aa)) form the DhaK domain. His-215 carries the post-translational modification Tele-(1,2,3-trihydroxypropan-2-yl)histidine.

As to quaternary structure, homodimer. Interacts with a homodimer of DhaS.

Its function is as follows. Coactivator for the transcription factor DhaS. The heterotetramer formed by DhaQ and DhaS functions as a transcriptional regulator. Activated by covalent binding of dihydroxyacetone to DhaQ. The complex activates the dhaKLM operon. This is DhaKLM operon coactivator DhaQ (dhaQ) from Lactococcus lactis subsp. lactis (strain IL1403) (Streptococcus lactis).